A 156-amino-acid chain; its full sequence is 6,7-dimethyl-8-ribityllumazine synthase (156 aa).

5-amino-6-(D-ribitylamino)uracil contacts are provided by residues Phe-22, 57–59 (AYE), and 81–83 (TVI). 86–87 (GT) is a (2S)-2-hydroxy-3-oxobutyl phosphate binding site. Catalysis depends on His-89, which acts as the Proton donor. Phe-114 is a 5-amino-6-(D-ribitylamino)uracil binding site. A (2S)-2-hydroxy-3-oxobutyl phosphate-binding site is contributed by Arg-128.

This sequence belongs to the DMRL synthase family. Forms an icosahedral capsid composed of 60 subunits, arranged as a dodecamer of pentamers.

It carries out the reaction (2S)-2-hydroxy-3-oxobutyl phosphate + 5-amino-6-(D-ribitylamino)uracil = 6,7-dimethyl-8-(1-D-ribityl)lumazine + phosphate + 2 H2O + H(+). It functions in the pathway cofactor biosynthesis; riboflavin biosynthesis; riboflavin from 2-hydroxy-3-oxobutyl phosphate and 5-amino-6-(D-ribitylamino)uracil: step 1/2. In terms of biological role, catalyzes the formation of 6,7-dimethyl-8-ribityllumazine by condensation of 5-amino-6-(D-ribitylamino)uracil with 3,4-dihydroxy-2-butanone 4-phosphate. This is the penultimate step in the biosynthesis of riboflavin. The protein is 6,7-dimethyl-8-ribityllumazine synthase of Photorhabdus laumondii subsp. laumondii (strain DSM 15139 / CIP 105565 / TT01) (Photorhabdus luminescens subsp. laumondii).